The chain runs to 460 residues: Chromosomal replication initiator protein DnaA (460 aa).

A domain I, interacts with DnaA modulators region spans residues 1-84 (MAVSLWQQCI…RFDIGSRPSA (84 aa)). Positions 84 to 123 (AKKPEPAPVAAVRVPNPQTKASVGTSFNTTEPVANTNHRS) are domain II. The disordered stretch occupies residues 103 to 123 (KASVGTSFNTTEPVANTNHRS). Residues 124-340 (NINPTYQFDN…GALNRVIANA (217 aa)) are domain III, AAA+ region. ATP-binding residues include Gly-168, Gly-170, Lys-171, and Thr-172. The segment at 341–460 (NFTGRPITID…YANLIRTLSS (120 aa)) is domain IV, binds dsDNA.

This sequence belongs to the DnaA family. In terms of assembly, oligomerizes as a right-handed, spiral filament on DNA at oriC.

It is found in the cytoplasm. Plays an essential role in the initiation and regulation of chromosomal replication. ATP-DnaA binds to the origin of replication (oriC) to initiate formation of the DNA replication initiation complex once per cell cycle. Binds the DnaA box (a 9 base pair repeat at the origin) and separates the double-stranded (ds)DNA. Forms a right-handed helical filament on oriC DNA; dsDNA binds to the exterior of the filament while single-stranded (ss)DNA is stabiized in the filament's interior. The ATP-DnaA-oriC complex binds and stabilizes one strand of the AT-rich DNA unwinding element (DUE), permitting loading of DNA polymerase. After initiation quickly degrades to an ADP-DnaA complex that is not apt for DNA replication. Binds acidic phospholipids. This chain is Chromosomal replication initiator protein DnaA, found in Shewanella sp. (strain MR-4).